The following is a 433-amino-acid chain: Chitinase-like protein EN03 (433 aa).

An N-terminal signal peptide occupies residues Met1 to Ala16. One can recognise a GH18 domain in the interval Ser23–Leu433. A disulfide bond links Cys27 and Cys54. An N-linked (GlcNAc...) asparagine glycan is attached at Asn220. Residues Cys337 and Cys418 are joined by a disulfide bond.

The protein belongs to the glycosyl hydrolase 18 family. IDGF subfamily.

The protein resides in the secreted. This Bombyx mori (Silk moth) protein is Chitinase-like protein EN03.